The chain runs to 228 residues: Max-interacting protein 1 (228 aa).

Disordered stretches follow at residues 29–76 (GYAS…NELE) and 161–228 (IGST…SFTS). The span at 43–56 (QHSKPPRRLSRAQK) shows a compositional bias: basic residues. Positions 57–70 (HSSGSSNTSTANRS) are enriched in polar residues. The 53-residue stretch at 67–119 (ANRSTHNELEKNRRAHLRLCLERLKVLIPLGPDCTRHTTLGLLNKAKAHIKKL) folds into the bHLH domain. Residues 173-183 (EREEIEVDVES) are compositionally biased toward acidic residues. Residues 216-228 (GYSSASVKLSFTS) are compositionally biased toward polar residues.

As to quaternary structure, interacts with SMC3. Efficient DNA binding requires dimerization with another bHLH protein. Binds DNA as a heterodimer with MAX. Interacts with RNF17. High levels found in the brain, heart and lung while lower levels are seen in the liver, kidney and skeletal muscle.

It is found in the nucleus. Its function is as follows. Transcriptional repressor. MXI1 binds with MAX to form a sequence-specific DNA-binding protein complex which recognizes the core sequence 5'-CAC[GA]TG-3'. MXI1 thus antagonizes MYC transcriptional activity by competing for MAX. This Homo sapiens (Human) protein is Max-interacting protein 1 (MXI1).